The chain runs to 682 residues: MIDQYKHQQLQIGLVSPQQIKAWANKNLPNGEAVGEVTRPSTFHYKTDKPEKDGLFCERIFGPIKSGICGCGNSRASGAENEDERFCQKCGVEFVDSRIRRYQMGYIKLACPVTHVWYLKGLPSYIANLLDKPLKKLEGLVYGDFSFARPSTKKPTFLRLRGLFEEEIASCNHSISPFFSTPGFATFRNREIATGAGAIREQLADLDLRIIIENSLVEWKELEDEGYSGDEWEDRKRRIRKVFLIRRMQLAKHFIQTNVEPEWMVLCLLPVLPPELRPIVYRSGDKVVTSDINELYKRVIRRNNNLAYLLKRSELAPADLVMCQEKLVQEAVDTLLDSGSRGQPTRDGHNKVYKSLSDVIEGKEGRFRETLLGKRVDYSGRSVIVVGPSLSLHQCGLPLEIAIKLFQLFVIRDLITKRATSNVRIAKRKIWEKEPIVWEILQEVMRGHPVLLNRAPTLHRLGIQAFQPTLVEGRTISLHPLVCKGFNADFDGDQMAVHLPLSLEAQAEARLLMFSHMNLLSPAIGDPICVPTQDMLIGLYVLTIGKRRGICANRYNSFRNYPNLKVNYNNNNSKYRKDKEPHFSSSYDALGAYRQKLISLDSPLWLRWNLDQRVIGSREVPIEIQYESLGTYHEIYAHYLIMGNRKKEIRSIYIRTTLGHISFYREIEEAVQGFSQAYSYTT.

The Zn(2+) site is built by Cys69, Cys71, Cys87, and Cys90. Mg(2+) is bound by residues Asp489, Asp491, and Asp493.

The protein belongs to the RNA polymerase beta' chain family. RpoC1 subfamily. In plastids the minimal PEP RNA polymerase catalytic core is composed of four subunits: alpha, beta, beta', and beta''. When a (nuclear-encoded) sigma factor is associated with the core the holoenzyme is formed, which can initiate transcription. Mg(2+) serves as cofactor. Zn(2+) is required as a cofactor.

It localises to the plastid. It is found in the chloroplast. The enzyme catalyses RNA(n) + a ribonucleoside 5'-triphosphate = RNA(n+1) + diphosphate. Functionally, DNA-dependent RNA polymerase catalyzes the transcription of DNA into RNA using the four ribonucleoside triphosphates as substrates. This is DNA-directed RNA polymerase subunit beta' from Hordeum vulgare (Barley).